The sequence spans 156 residues: CRIB domain-containing protein RIC10 (156 aa).

One can recognise a CRIB domain in the interval 30–43 (IGFPTDVKHVAHIG). Positions 68-77 (RPSSFSNARP) are enriched in polar residues. Positions 68 to 156 (RPSSFSNARP…SYKSTVSRLI (89 aa)) are disordered. Residues 78–96 (STSFFTSSSSTDFDQGSSQ) are compositionally biased toward low complexity. Over residues 117-128 (NNKKKSSRRKKS) the composition is skewed to basic residues. The span at 129-156 (SSSSSSPKSSRSSVLSKSSYKSTVSRLI) shows a compositional bias: low complexity.

Expressed in roots, leaves, flowers and pollen.

It localises to the cytoplasm. Its function is as follows. Functions as a downstream effector of Rho-related GTP binding proteins of the 'Rho of Plants' (ROPs) family. Participates in the propagation of ROP GTPase signals in specific cellular responses. Is involved in pollen tube growth regulation. This Arabidopsis thaliana (Mouse-ear cress) protein is CRIB domain-containing protein RIC10 (RIC10).